The chain runs to 236 residues: 2-C-methyl-D-erythritol 4-phosphate cytidylyltransferase (236 aa).

This sequence belongs to the IspD/TarI cytidylyltransferase family. IspD subfamily. As to quaternary structure, homodimer.

The catalysed reaction is 2-C-methyl-D-erythritol 4-phosphate + CTP + H(+) = 4-CDP-2-C-methyl-D-erythritol + diphosphate. The protein operates within isoprenoid biosynthesis; isopentenyl diphosphate biosynthesis via DXP pathway; isopentenyl diphosphate from 1-deoxy-D-xylulose 5-phosphate: step 2/6. Functionally, catalyzes the formation of 4-diphosphocytidyl-2-C-methyl-D-erythritol from CTP and 2-C-methyl-D-erythritol 4-phosphate (MEP). This chain is 2-C-methyl-D-erythritol 4-phosphate cytidylyltransferase, found in Klebsiella pneumoniae subsp. pneumoniae (strain ATCC 700721 / MGH 78578).